Reading from the N-terminus, the 337-residue chain is Oligopeptide transport ATP-binding protein OppD (337 aa).

An ABC transporter domain is found at 20 to 269; that stretch reads LNVKDLRVTF…PVHPYSIGLL (250 aa). 56–63 is a binding site for ATP; that stretch reads GESGSGKS.

Belongs to the ABC transporter superfamily. The complex is composed of two ATP-binding proteins (OppD and OppF), two transmembrane proteins (OppB and OppC) and a solute-binding protein (OppA or MppA).

Its subcellular location is the cell inner membrane. The catalysed reaction is a [peptide](out) + ATP + H2O = a [peptide](in) + ADP + phosphate + H(+). It carries out the reaction L-alanyl-gamma-D-glutamyl-meso-2,6-diaminopimelate(out) + ATP + H2O = L-alanyl-gamma-D-glutamyl-meso-2,6-diaminopimelate(in) + ADP + phosphate + H(+). In terms of biological role, part of the ABC transporter complex OppABCDF involved in the uptake of oligopeptides and of the ABC transporter complex MppA-OppBCDF involved in the uptake of the cell wall murein tripeptide L-alanyl-gamma-D-glutamyl-meso-diaminopimelate. Probably responsible for energy coupling to the transport system. Plays an important nutritional role and is involved in the recycling of cell wall peptides. The sequence is that of Oligopeptide transport ATP-binding protein OppD (oppD) from Escherichia coli (strain K12).